The following is a 419-amino-acid chain: Ribosome biogenesis protein WDR12 homolog (419 aa).

Positions 10–91 are ubiquitin-like (UBL) domain; that stretch reads VQVHLKTKQE…EDAIEIEYVE (82 aa). WD repeat units lie at residues 103–141, 142–184, 191–230, 249–287, 289–328, 334–374, and 378–416; these read LHDD…LTIP, GHTA…NTVE, GHER…AGEG, GHRE…IKAE, STNK…GSVV, GHNA…APLY, and GHGE…VENM.

It belongs to the WD repeat WDR12/YTM1 family.

Its subcellular location is the nucleus. The protein localises to the nucleolus. It is found in the nucleoplasm. Required for maturation of ribosomal RNAs and formation of the large ribosomal subunit. The sequence is that of Ribosome biogenesis protein WDR12 homolog from Drosophila persimilis (Fruit fly).